A 349-amino-acid polypeptide reads, in one-letter code: Anthranilate phosphoribosyltransferase (349 aa).

5-phospho-alpha-D-ribose 1-diphosphate-binding positions include Gly82, 85 to 86, 92 to 95, 110 to 118, and Ser122; these read GD, NVST, and KHGNRAVSG. An anthranilate-binding site is contributed by Gly82. Ser94 lines the Mg(2+) pocket. Asn113 provides a ligand contact to anthranilate. Position 168 (Arg168) interacts with anthranilate. Positions 227 and 228 each coordinate Mg(2+).

Belongs to the anthranilate phosphoribosyltransferase family. In terms of assembly, homodimer. It depends on Mg(2+) as a cofactor.

It catalyses the reaction N-(5-phospho-beta-D-ribosyl)anthranilate + diphosphate = 5-phospho-alpha-D-ribose 1-diphosphate + anthranilate. The protein operates within amino-acid biosynthesis; L-tryptophan biosynthesis; L-tryptophan from chorismate: step 2/5. In terms of biological role, catalyzes the transfer of the phosphoribosyl group of 5-phosphorylribose-1-pyrophosphate (PRPP) to anthranilate to yield N-(5'-phosphoribosyl)-anthranilate (PRA). This is Anthranilate phosphoribosyltransferase from Pseudomonas syringae pv. tomato (strain ATCC BAA-871 / DC3000).